A 189-amino-acid polypeptide reads, in one-letter code: Crossover junction endodeoxyribonuclease RuvC (189 aa).

Active-site residues include aspartate 9, glutamate 70, and aspartate 143. 3 residues coordinate Mg(2+): aspartate 9, glutamate 70, and aspartate 143. Residues 162 to 178 (MGAASGNSSLTPAQKAW) are compositionally biased toward low complexity. A disordered region spans residues 162-189 (MGAASGNSSLTPAQKAWADAEAKARRKR). A compositionally biased stretch (basic and acidic residues) spans 179–189 (ADAEAKARRKR).

Belongs to the RuvC family. Homodimer which binds Holliday junction (HJ) DNA. The HJ becomes 2-fold symmetrical on binding to RuvC with unstacked arms; it has a different conformation from HJ DNA in complex with RuvA. In the full resolvosome a probable DNA-RuvA(4)-RuvB(12)-RuvC(2) complex forms which resolves the HJ. Requires Mg(2+) as cofactor.

Its subcellular location is the cytoplasm. It catalyses the reaction Endonucleolytic cleavage at a junction such as a reciprocal single-stranded crossover between two homologous DNA duplexes (Holliday junction).. Functionally, the RuvA-RuvB-RuvC complex processes Holliday junction (HJ) DNA during genetic recombination and DNA repair. Endonuclease that resolves HJ intermediates. Cleaves cruciform DNA by making single-stranded nicks across the HJ at symmetrical positions within the homologous arms, yielding a 5'-phosphate and a 3'-hydroxyl group; requires a central core of homology in the junction. The consensus cleavage sequence is 5'-(A/T)TT(C/G)-3'. Cleavage occurs on the 3'-side of the TT dinucleotide at the point of strand exchange. HJ branch migration catalyzed by RuvA-RuvB allows RuvC to scan DNA until it finds its consensus sequence, where it cleaves and resolves the cruciform DNA. In Paenarthrobacter aurescens (strain TC1), this protein is Crossover junction endodeoxyribonuclease RuvC.